A 431-amino-acid chain; its full sequence is Large envelope protein (431 aa).

Glycine 2 is lipidated: N-myristoyl glycine; by host. The tract at residues glycine 2–leucine 148 is pre-S1. The pre-S stretch occupies residues glycine 2 to serine 207. Topologically, residues glycine 2–serine 214 are virion surface; in external conformation. At glycine 2–arginine 286 the chain is on the intravirion; in internal conformation side. N-linked (GlcNAc...) asparagine glycosylation is present at asparagine 3. Residues isoleucine 115–proline 146 form a disordered region. A pre-S2 region spans residues threonine 149–serine 207. A helical transmembrane segment spans residues leucine 215–isoleucine 235. Over alanine 236–arginine 286 the chain is Intravirion; in external conformation. The chain crosses the membrane as a helical span at residues phenylalanine 287–tryptophan 307. Residues lysine 308 to asparagine 379 are Virion surface-facing. Residue asparagine 351 is glycosylated (N-linked (GlcNAc...) asparagine; by host). The helical transmembrane segment at leucine 380 to isoleucine 400 threads the bilayer. At tryptophan 401–tryptophan 406 the chain is on the intravirion side. Residues glycine 407–valine 429 traverse the membrane as a helical segment. The Virion surface segment spans residues tyrosine 430–isoleucine 431.

The protein belongs to the orthohepadnavirus major surface antigen family. In terms of assembly, in its internal form (Li-HBsAg), interacts with the capsid protein and with the isoform S. Interacts with host chaperone CANX. Associates with host chaperone CANX through its pre-S2 N glycan; this association may be essential for isoform M proper secretion. As to quaternary structure, interacts with isoform L. Interacts with the antigens of satellite virus HDV (HDVAgs); this interaction is required for encapsidation of HDV genomic RNA. Post-translationally, isoform M is N-terminally acetylated by host at a ratio of 90%, and N-glycosylated by host at the pre-S2 region. In terms of processing, myristoylated.

It localises to the virion membrane. Its function is as follows. The large envelope protein exists in two topological conformations, one which is termed 'external' or Le-HBsAg and the other 'internal' or Li-HBsAg. In its external conformation the protein attaches the virus to cell receptors and thereby initiating infection. This interaction determines the species specificity and liver tropism. This attachment induces virion internalization predominantly through caveolin-mediated endocytosis. The large envelope protein also assures fusion between virion membrane and endosomal membrane. In its internal conformation the protein plays a role in virion morphogenesis and mediates the contact with the nucleocapsid like a matrix protein. Functionally, the middle envelope protein plays an important role in the budding of the virion. It is involved in the induction of budding in a nucleocapsid independent way. In this process the majority of envelope proteins bud to form subviral lipoprotein particles of 22 nm of diameter that do not contain a nucleocapsid. The protein is Large envelope protein of Woodchuck hepatitis B virus (isolate 59) (WHV).